The following is a 458-amino-acid chain: tRNA(Ile)-lysidine synthase (458 aa).

35-40 provides a ligand contact to ATP; it reads SGGVDS.

Belongs to the tRNA(Ile)-lysidine synthase family.

It is found in the cytoplasm. It carries out the reaction cytidine(34) in tRNA(Ile2) + L-lysine + ATP = lysidine(34) in tRNA(Ile2) + AMP + diphosphate + H(+). In terms of biological role, ligates lysine onto the cytidine present at position 34 of the AUA codon-specific tRNA(Ile) that contains the anticodon CAU, in an ATP-dependent manner. Cytidine is converted to lysidine, thus changing the amino acid specificity of the tRNA from methionine to isoleucine. This Nitrosomonas europaea (strain ATCC 19718 / CIP 103999 / KCTC 2705 / NBRC 14298) protein is tRNA(Ile)-lysidine synthase.